A 273-amino-acid polypeptide reads, in one-letter code: Bidirectional sugar transporter SWEET1a (273 aa).

The Extracellular portion of the chain corresponds to 1 to 6 (MEHIAR). A helical transmembrane segment spans residues 7–27 (FFFGVSGNVIALFLFLSPVVT). A MtN3/slv 1 domain is found at 7–95 (FFFGVSGNVI…VIFLIFAERK (89 aa)). At 28-42 (FWRIIKKRSTEDFSG) the chain is on the cytoplasmic side. A helical membrane pass occupies residues 43 to 63 (VPYNMTLLNCLLSAWYGLPFV). Over 64–71 (SPNNILVT) the chain is Extracellular. A helical membrane pass occupies residues 72–92 (TINGTGSVIEAIYVVIFLIFA). The Cytoplasmic portion of the chain corresponds to 93-101 (ERKARLKMM). Residues 102–122 (GLLGLVTSIFTMVVLVSLLAL) traverse the membrane as a helical segment. Over 123-128 (HGQGRK) the chain is Extracellular. Residues 129-149 (LFCGLAATIFSICMYASPLSI) traverse the membrane as a helical segment. The MtN3/slv 2 domain maps to 131–214 (CGLAATIFSI…ILYAIYRNHK (84 aa)). Residues 150–163 (MRLVIKTKSVEFMP) lie on the Cytoplasmic side of the membrane. Residues 164-184 (FLLSLSVFLCGTSWFIYGLLG) form a helical membrane-spanning segment. Over 185 to 188 (RDPF) the chain is Extracellular. A helical membrane pass occupies residues 189–209 (IAIPNGCGSFLGLMQLILYAI). The Cytoplasmic segment spans residues 210 to 273 (YRNHKGATPA…SADDKVASQV (64 aa)).

Belongs to the SWEET sugar transporter family. Forms homooligomers and/or heterooligomers.

The protein localises to the cell membrane. Its function is as follows. Mediates both low-affinity uptake and efflux of sugar across the plasma membrane. The sequence is that of Bidirectional sugar transporter SWEET1a (SWEET1A) from Oryza sativa subsp. japonica (Rice).